We begin with the raw amino-acid sequence, 3142 residues long: Huntingtin (3142 aa).

The segment at 3-13 (TLEKLMKAFES) is sufficient for interaction with TPR. K9 bears the N6-acetyllysine mark. The tract at residues 14 to 85 (LKSFQQQQQQ…PGPAVAEEPL (72 aa)) is disordered. Residues 18–37 (QQQQQQQQQQQQQQQQQQQQ) are compositionally biased toward low complexity. Positions 38-78 (QPPPPPPPPPPPQLPQPPPQAQPLLPQPQPPPPPPPPPPGP) are enriched in pro residues. An N6-acetyllysine mark is found at K176 and K234. 3 HEAT repeats span residues 204-241 (PYLV…SFGN), 246-283 (NEIK…HSRR), and 316-360 (LTLR…VYEL). At K343 the chain carries N6-acetyllysine. S411, S417, S419, and S432 each carry phosphoserine. K442 bears the N6-acetyllysine mark. A disordered region spans residues 447 to 469 (EEEALEDDSESRSDVSSSALTAS). The segment at 491-502 (GHDIITEQPRSQ) is interaction with ZDHHC17. Residues 517 to 583 (LTSSATDGDE…TPSDSSEIVL (67 aa)) are disordered. Positions 531–545 (SHSSSQVSAVPSDPA) are enriched in low complexity. The segment covering 550–579 (DGTQASSPISDSSQTTTEGPDSAVTPSDSS) has biased composition (polar residues). G551 is lipidated: N-myristoyl glycine. Phosphoserine is present on residues S640 and S643. 2 HEAT repeats span residues 802–839 (FSLA…SLCS) and 902–940 (KLQE…KLFY). The segment at 1176-1225 (PSLSPIRRKGKEKEPGEQASVPLSPKKGSEASAASRQSDTSGPVTTSKSS) is disordered. Phosphoserine; by CDK5 occurs at positions 1179 and 1199. Positions 1207 to 1225 (SAASRQSDTSGPVTTSKSS) are enriched in polar residues. Phosphoserine occurs at positions 1870 and 1874. The disordered stretch occupies residues 2330-2351 (ERRTNTPKAISEEEEEVDPNTQ). Positions 2395–2404 (IIISLARLPL) match the Nuclear export signal motif. The interval 2633-2662 (EEEWDEEEEEEADAPAPSSPPTSPVNSRKH) is disordered. The span at 2634–2645 (EEWDEEEEEEAD) shows a compositional bias: acidic residues.

The protein belongs to the huntingtin family. As to quaternary structure, interacts with PFN1. Interacts through its N-terminus with PRPF40A. Interacts with PQBP1. Interacts with SETD2. Interacts with SH3GLB1. Interacts with SYVN. Interacts with TPR; the interaction is inhibited by forms of Huntingtin with expanded polyglutamine stretch. Interacts with ZDHHC13 (via ANK repeats). Interacts with ZDHHC17 (via ANK repeats). Interacts with F8A1/F8A2/F8A3. Found in a complex with F8A1/F8A2/F8A3, HTT and RAB5A; mediates the recruitment of HTT by RAB5A. Cleaved by caspases downstream of the polyglutamine stretch. The resulting N-terminal fragments are cytotoxic and provokes apoptosis. Post-translationally, forms with expanded polyglutamine expansion are specifically ubiquitinated by SYVN1, which promotes their proteasomal degradation. In terms of processing, phosphorylation at Ser-1179 and Ser-1199 by CDK5 in response to DNA damage in nuclei of neurons protects neurons against polyglutamine expansion as well as DNA damage mediated toxicity. Myristoylated at Gly-551, following proteolytic cleavage at Asp-550. Expressed in the brain cortex (at protein level). Widely expressed with the highest level of expression in the brain (nerve fibers, varicosities, and nerve endings). In the brain, the regions where it can be mainly found are the cerebellar cortex, the neocortex, the striatum, and the hippocampal formation.

It is found in the cytoplasm. The protein resides in the nucleus. It localises to the early endosome. Its subcellular location is the cytoplasmic vesicle. The protein localises to the autophagosome. Its function is as follows. May play a role in microtubule-mediated transport or vesicle function. Promotes the formation of autophagic vesicles. The chain is Huntingtin (HTT) from Homo sapiens (Human).